The following is a 175-amino-acid chain: ATP synthase subunit delta (175 aa).

This sequence belongs to the ATPase delta chain family. F-type ATPases have 2 components, F(1) - the catalytic core - and F(0) - the membrane proton channel. F(1) has five subunits: alpha(3), beta(3), gamma(1), delta(1), epsilon(1). F(0) has three main subunits: a(1), b(2) and c(10-14). The alpha and beta chains form an alternating ring which encloses part of the gamma chain. F(1) is attached to F(0) by a central stalk formed by the gamma and epsilon chains, while a peripheral stalk is formed by the delta and b chains.

The protein localises to the cell inner membrane. In terms of biological role, f(1)F(0) ATP synthase produces ATP from ADP in the presence of a proton or sodium gradient. F-type ATPases consist of two structural domains, F(1) containing the extramembraneous catalytic core and F(0) containing the membrane proton channel, linked together by a central stalk and a peripheral stalk. During catalysis, ATP synthesis in the catalytic domain of F(1) is coupled via a rotary mechanism of the central stalk subunits to proton translocation. This protein is part of the stalk that links CF(0) to CF(1). It either transmits conformational changes from CF(0) to CF(1) or is implicated in proton conduction. This Xanthomonas oryzae pv. oryzae (strain MAFF 311018) protein is ATP synthase subunit delta.